We begin with the raw amino-acid sequence, 145 residues long: Large ribosomal subunit protein uL24 (145 aa).

Disordered regions lie at residues 1 to 21 and 122 to 145; these read MKFNPFVTSDRSKNRKRHFNA and KAKSRQVGKEKGKYKEETIEKMQE. Residue Lys-136 forms a Glycyl lysine isopeptide (Lys-Gly) (interchain with G-Cter in SUMO2) linkage. Position 139 is a phosphothreonine (Thr-139).

It belongs to the universal ribosomal protein uL24 family. Component of the large ribosomal subunit. Interacts with DHX33. In terms of processing, ufmylated by UFL1 in response to endoplasmic reticulum stress, promoting reticulophagy of endoplasmic reticulum sheets.

It localises to the cytoplasm. Component of the large ribosomal subunit. The ribosome is a large ribonucleoprotein complex responsible for the synthesis of proteins in the cell. This chain is Large ribosomal subunit protein uL24 (Rpl26), found in Rattus norvegicus (Rat).